A 733-amino-acid polypeptide reads, in one-letter code: Ribosomal protein S6 kinase 2 alpha (733 aa).

Residues 18–38 (EDPENGHGSPEEGGRHTSKDE) form a disordered region. The Protein kinase 1 domain maps to 62–321 (FVLLKVLGQG…AEEIKRQPFF (260 aa)). Residues 68 to 76 (LGQGSFGKV) and lysine 94 contribute to the ATP site. The active-site Proton acceptor is aspartate 187. Phosphoserine is present on serine 221. The AGC-kinase C-terminal domain maps to 322–391 (STIDWNKLFR…VAPALVEEDA (70 aa)). Threonine 359 carries the post-translational modification Phosphothreonine. Position 363 is a phosphoserine (serine 363). Position 380 is a phosphoserine; by autocatalysis (serine 380). Residues 416-673 (YTVRETIGVG…AKQVLQHEWI (258 aa)) form the Protein kinase 2 domain. ATP-binding positions include 422–430 (IGVGSYSVC) and lysine 445. Residue aspartate 533 is the Proton acceptor of the active site. Phosphothreonine is present on threonine 571. At serine 730 the chain carries Phosphoserine.

Belongs to the protein kinase superfamily. AGC Ser/Thr protein kinase family. S6 kinase subfamily. The cofactor is Mg(2+). Autophosphorylated on Ser-380, as part of the activation process.

The catalysed reaction is L-seryl-[protein] + ATP = O-phospho-L-seryl-[protein] + ADP + H(+). It catalyses the reaction L-threonyl-[protein] + ATP = O-phospho-L-threonyl-[protein] + ADP + H(+). With respect to regulation, activated by multiple phosphorylations on threonine and serine residues. In terms of biological role, serine/threonine kinase that may play a role in mediating the growth-factor and stress induced activation of transcription. This is Ribosomal protein S6 kinase 2 alpha (rps6ka) from Xenopus laevis (African clawed frog).